A 95-amino-acid polypeptide reads, in one-letter code: UPF0358 protein BT9727_3692 (95 aa).

It belongs to the UPF0358 family.

This is UPF0358 protein BT9727_3692 from Bacillus thuringiensis subsp. konkukian (strain 97-27).